The chain runs to 61 residues: Putative neurotoxin-D (61 aa).

The signal sequence occupies residues 1–19; it reads MRTTVAILLVLFALSAILA. 3 cysteine pairs are disulfide-bonded: Cys-31–Cys-51, Cys-37–Cys-56, and Cys-39–Cys-58.

Expressed by the venom gland.

Its subcellular location is the secreted. The polypeptide is Putative neurotoxin-D (Lychas mucronatus (Chinese swimming scorpion)).